The chain runs to 616 residues: Dihydroxy-acid dehydratase (616 aa).

Asp81 lines the Mg(2+) pocket. Position 122 (Cys122) interacts with [2Fe-2S] cluster. Residues Asp123 and Lys124 each contribute to the Mg(2+) site. Residue Lys124 is modified to N6-carboxylysine. Cys195 lines the [2Fe-2S] cluster pocket. Glu491 contacts Mg(2+). The active-site Proton acceptor is Ser517.

The protein belongs to the IlvD/Edd family. Homodimer. Requires [2Fe-2S] cluster as cofactor. It depends on Mg(2+) as a cofactor.

The enzyme catalyses (2R)-2,3-dihydroxy-3-methylbutanoate = 3-methyl-2-oxobutanoate + H2O. It carries out the reaction (2R,3R)-2,3-dihydroxy-3-methylpentanoate = (S)-3-methyl-2-oxopentanoate + H2O. It functions in the pathway amino-acid biosynthesis; L-isoleucine biosynthesis; L-isoleucine from 2-oxobutanoate: step 3/4. It participates in amino-acid biosynthesis; L-valine biosynthesis; L-valine from pyruvate: step 3/4. Functionally, functions in the biosynthesis of branched-chain amino acids. Catalyzes the dehydration of (2R,3R)-2,3-dihydroxy-3-methylpentanoate (2,3-dihydroxy-3-methylvalerate) into 2-oxo-3-methylpentanoate (2-oxo-3-methylvalerate) and of (2R)-2,3-dihydroxy-3-methylbutanoate (2,3-dihydroxyisovalerate) into 2-oxo-3-methylbutanoate (2-oxoisovalerate), the penultimate precursor to L-isoleucine and L-valine, respectively. This Salmonella agona (strain SL483) protein is Dihydroxy-acid dehydratase.